A 107-amino-acid polypeptide reads, in one-letter code: Class I hydrophobin 3 (107 aa).

The N-terminal stretch at 1–18 is a signal peptide; the sequence is MQFKVLAALVIGATLAAA. Disulfide bonds link cysteine 26/cysteine 86, cysteine 33/cysteine 80, cysteine 34/cysteine 67, and cysteine 87/cysteine 100. Residues asparagine 35 and asparagine 89 are each glycosylated (N-linked (GlcNAc...) asparagine).

The protein belongs to the fungal hydrophobin family. In terms of assembly, self-assembles to form functional amyloid fibrils called rodlets. Self-assembly into fibrillar rodlets occurs spontaneously at hydrophobic:hydrophilic interfaces and the rodlets further associate laterally to form amphipathic monolayers.

It is found in the secreted. It localises to the cell wall. Its function is as follows. Aerial growth, conidiation, and dispersal of filamentous fungi in the environment rely upon a capability of their secreting small amphipathic proteins called hydrophobins (HPBs) with low sequence identity. Class I can self-assemble into an outermost layer of rodlet bundles on aerial cell surfaces, conferring cellular hydrophobicity that supports fungal growth, development and dispersal; whereas Class II form highly ordered films at water-air interfaces through intermolecular interactions but contribute nothing to the rodlet structure. Pnh3 is a class I hydrophobin that might be involved in the attachment of the hydrophilic wall of hyphae to the hydrophobic surface of wood under inorganic phosphate (Pi)-deficient conditions and enable the mycelium to degrade efficiently the components of wood and to acquire nutrients containing Pi. This chain is Class I hydrophobin 3, found in Pholiota nameko.